Reading from the N-terminus, the 180-residue chain is Inosine/xanthosine triphosphatase (180 aa).

Substrate is bound at residue 8 to 13 (TTNPAK). Positions 38 and 68 each coordinate Mg(2+). Residue 68-69 (EA) coordinates substrate.

Belongs to the YjjX NTPase family. Homodimer. The cofactor is Mg(2+). It depends on Mn(2+) as a cofactor.

It catalyses the reaction XTP + H2O = XDP + phosphate + H(+). The enzyme catalyses ITP + H2O = IDP + phosphate + H(+). Functionally, phosphatase that hydrolyzes non-canonical purine nucleotides such as XTP and ITP to their respective diphosphate derivatives. Probably excludes non-canonical purines from DNA/RNA precursor pool, thus preventing their incorporation into DNA/RNA and avoiding chromosomal lesions. This chain is Inosine/xanthosine triphosphatase, found in Yersinia pestis bv. Antiqua (strain Antiqua).